A 333-amino-acid chain; its full sequence is MATLQEKLITPIAAESTTPNNKITVVGVGQVGMACAISILGKGLCDELALVDVWEDKLKGEMMDLQHGSLVLQTHKIVADKDYAVTANSKIVVVTAGVRQQEGESRLNLVQRNVNVFKFIIPQIMKYSPNCTILVVSNPVDILTYVTWKLSGLPKHRVIGSGCNLDSARFRHLMAEKLGIHPTSCHGWILGEHGDSSVAVWSGVNVAGVSLQELNPAMGTDRDSENWKEVHKLVVDSAYEVIKLKGYTNWAIGFSVADLIESMLKNLCRVHPVSTMVKGMYGIENEVFLSLPCVLSASGLTSVINQKLKDEEVAQLKKSADTLWGIQKDLKDL.

NAD(+) contacts are provided by residues 29–57 (GQVG…WEDK) and Arg99. Substrate is bound by residues Arg106, Asn138, and Arg169. Asn138 contributes to the NAD(+) binding site. The Proton acceptor role is filled by His193. Thr248 is a binding site for substrate.

This sequence belongs to the LDH/MDH superfamily. LDH family. In terms of assembly, homotetramer.

Its subcellular location is the cytoplasm. The catalysed reaction is (S)-lactate + NAD(+) = pyruvate + NADH + H(+). It participates in fermentation; pyruvate fermentation to lactate; (S)-lactate from pyruvate: step 1/1. Its function is as follows. Interconverts simultaneously and stereospecifically pyruvate and lactate with concomitant interconversion of NADH and NAD(+). In Trachemys scripta elegans (Red-eared slider turtle), this protein is L-lactate dehydrogenase B chain (LDHB).